The chain runs to 249 residues: ATP synthase subunit a 1 (249 aa).

Helical transmembrane passes span 26–46 (FTNVSAFMVATVVVASGFLYL), 84–104 (FFPFVFSLFMFVLVANFLGLF), 114–134 (IIVTFALAVLVIGTVIVYGFF), 143–163 (LFVPSGVPGIIVPLVVAIEII), 193–213 (FVVSLAALGPIGIGGAVLPLI), and 216–236 (VAITALEFLVAFLQAYVFTVL).

This sequence belongs to the ATPase A chain family. F-type ATPases have 2 components, CF(1) - the catalytic core - and CF(0) - the membrane proton channel. CF(1) has five subunits: alpha(3), beta(3), gamma(1), delta(1), epsilon(1). CF(0) has three main subunits: a(1), b(2) and c(9-12). The alpha and beta chains form an alternating ring which encloses part of the gamma chain. CF(1) is attached to CF(0) by a central stalk formed by the gamma and epsilon chains, while a peripheral stalk is formed by the delta and b chains.

It localises to the cell inner membrane. Key component of the proton channel; it plays a direct role in the translocation of protons across the membrane. The sequence is that of ATP synthase subunit a 1 from Brucella anthropi (strain ATCC 49188 / DSM 6882 / CCUG 24695 / JCM 21032 / LMG 3331 / NBRC 15819 / NCTC 12168 / Alc 37) (Ochrobactrum anthropi).